The primary structure comprises 506 residues: Cobyric acid synthase (506 aa).

In terms of domain architecture, GATase cobBQ-type spans Asp-251 to Phe-448. Cys-332 acts as the Nucleophile in catalysis. Residue His-440 is part of the active site.

Belongs to the CobB/CobQ family. CobQ subfamily.

The protein operates within cofactor biosynthesis; adenosylcobalamin biosynthesis. Catalyzes amidations at positions B, D, E, and G on adenosylcobyrinic A,C-diamide. NH(2) groups are provided by glutamine, and one molecule of ATP is hydrogenolyzed for each amidation. This Salmonella agona (strain SL483) protein is Cobyric acid synthase.